A 407-amino-acid chain; its full sequence is Resuscitation-promoting factor RpfA (407 aa).

The first 33 residues, 1 to 33 (MSGRHRKPTTSNVSVAKIAFTGAVLGGGGIAMA), serve as a signal peptide directing secretion. Disordered stretches follow at residues 142-253 (VNGE…ADLA) and 271-371 (LPAA…AETP). Over residues 148–159 (PLAPPPADPAPP) the composition is skewed to pro residues. Positions 160-170 (VELAANDLPAP) are enriched in low complexity. Residues 171–193 (LGEPLPAAPADPAPPADLAPPAP) show a composition bias toward pro residues. 2 consecutive repeat copies span residues 178–185 (APADPAPP) and 186–193 (ADLAPPAP). The interval 178–359 (APADPAPPAD…PDPQPADAPP (182 aa)) is 12 X 8 AA approximate repeats of A-P-A-D-L-A-P-P. Residues 194–210 (ADVAPPVELAVNDLPAP) are compositionally biased toward low complexity. Over residues 211 to 249 (LGEPLPAAPADPAPPADLAPPAPADLAPPAPADLAPPAP) the composition is skewed to pro residues. 10 repeat units span residues 218-225 (APADPAPP), 226-233 (ADLAPPAP), 240-247 (APADLAPP), 248-255 (APADLAPP), 274-281 (APAELAPP), 287-294 (ASADLAPP), 295-302 (APADLAPP), 303-310 (APAELAPP), 311-318 (APADLAPP), and 353-359 (QPADAPP). Residues 274-292 (APAELAPPADLAPASADLA) show a composition bias toward low complexity. Pro residues-rich tracts occupy residues 293–312 (PPAP…PPAP) and 350–361 (PDPQPADAPPPG).

Belongs to the transglycosylase family. Rpf subfamily.

Functionally, factor that stimulates resuscitation of dormant cells. Has peptidoglycan (PG) hydrolytic activity. This is Resuscitation-promoting factor RpfA (rpfA) from Mycobacterium tuberculosis (strain CDC 1551 / Oshkosh).